We begin with the raw amino-acid sequence, 2879 residues long: Peramine synthetase ppzA (2879 aa).

A compositionally biased stretch (basic and acidic residues) spans 1–12; sequence MTYDEGGHRNNE. The interval 1-52 is disordered; it reads MTYDEGGHRNNEETPQDVNMSSNNEGMSTSSPTGSYGEIIGQATVSVPQEDQ. The segment covering 16–34 has biased composition (polar residues); that stretch reads QDVNMSSNNEGMSTSSPTG. The interval 351–747 is adenylation 1; the sequence is QEQCRLQPNT…VGRKDTQVKI (397 aa). One can recognise a Carrier 1 domain in the interval 882–958; sequence QPLSDMERLL…DLSRQSKYIE (77 aa). Residue S919 is modified to O-(pantetheine 4'-phosphoryl)serine. Residues 997 to 1410 are condensation; it reads DAYPCTPLQE…ITILTTEDLE (414 aa). Residues 1433–1827 form an adenylation 2 region; that stretch reads DKVQHRPNAP…LSFVRRKDTT (395 aa). The interval 1958-2050 is methylation (Met) domain; sequence LEIGCGSGMM…KYLVKLIQDI (93 aa). Positions 2370–2448 constitute a Carrier 2 domain; it reads WPTTDTGKEL…RLLLDCCCDD (79 aa). Residue S2407 is modified to O-(pantetheine 4'-phosphoryl)serine. Residues 2500–2817 form a thiesterase (TE) domain region; it reads TVLLTGANGF…LEDMLQDLDD (318 aa).

Belongs to the NRP synthetase family. The cofactor is pantetheine 4'-phosphate.

The enzyme catalyses (S)-1-pyrroline-5-carboxylate + L-arginine + S-adenosyl-L-methionine + 2 ATP = peramine + 2 AMP + S-adenosyl-L-homocysteine + 2 diphosphate + H2O + 2 H(+). It participates in secondary metabolite biosynthesis. Its function is as follows. Nonribosomal peptide synthetase; part of the gene cluster that mediates the biosynthesis of pyrrolopyrazines, secondary metabolites showing insecticidal activity. The single multifunctional NRPS ppzA is responsible for the biosynthesis of peramine. The condensation domain of ppzA is proposed to catalyze formation of a peptide bond between 1-pyrroline-5-carboxylate and arginine. The methylation domain of ppzA would catalyze the N-methylation of the alpha-amino group of arginine. The reductase domain is proposed to be responsible for reduction of the thioester and the cyclization to form an iminium ion resulting in release from the peptide synthetase. Deprotonation of this intermediate and oxidation of the pyrroline ring would give rise to peramine. This final oxidation to give the pyrrole functionality may be spontaneous. In Epichloe species that produce only peramine, the peramine synthetase gene is not localized in a gene cluster, in contrast to Metarhizium species that contain additional pyrrolopyrazine biosynthesis genes. The 2-oxoglutarate-Fe(II) type oxidoreductase ppzC hydroxylates peramine to yield the newly identified compound 8-hydroxyperamine whereas ppzD converts L-proline into trans-4-hydroxy-L-proline, a precursor of peramine biosynthesis. This chain is Peramine synthetase ppzA, found in Metarhizium rileyi (strain RCEF 4871) (Nomuraea rileyi).